The chain runs to 111 residues: Large ribosomal subunit protein uL22 (111 aa).

Belongs to the universal ribosomal protein uL22 family. Part of the 50S ribosomal subunit.

Functionally, this protein binds specifically to 23S rRNA; its binding is stimulated by other ribosomal proteins, e.g. L4, L17, and L20. It is important during the early stages of 50S assembly. It makes multiple contacts with different domains of the 23S rRNA in the assembled 50S subunit and ribosome. The globular domain of the protein is located near the polypeptide exit tunnel on the outside of the subunit, while an extended beta-hairpin is found that lines the wall of the exit tunnel in the center of the 70S ribosome. The chain is Large ribosomal subunit protein uL22 from Xylella fastidiosa (strain 9a5c).